A 358-amino-acid polypeptide reads, in one-letter code: Tripartite motif-containing protein 54 (358 aa).

The segment at 26–82 (CPICLEMFSKPVVILPCQHNLCRKCANDVFQASNPLWQSRGSTTVSSGGRFRCPSCR) adopts an RING-type zinc-finger fold. The segment at 121–163 (EQHLMCEEHEEEKINIYCLSCEVPTCSLCKVFGAHKDCEVAPL) adopts a B box-type zinc-finger fold. Zn(2+) contacts are provided by Cys126, His129, Cys149, and His155. A mediates microtubule-binding and homooligomerization region spans residues 168 to 211 (KRQKSELSDGIAMLVAGNDRVQAVITQMEEVCQTIEDNSRRQKQ). Residues 194–258 (QMEEVCQTIE…LIRQYGDHLE (65 aa)) are a coiled coil. The region spanning 271 to 329 (MEEPQMALYLQQAKELINKVGAMSKVELAGRPEPGYESMEQFTVSVEHVAEMLRTIDFQ) is the COS domain. Residues 326-358 (IDFQPGASGEEEEVAPDGDEGSAGQEEERPDGP) form a disordered region. Residues 334-345 (GEEEEVAPDGDE) show a composition bias toward acidic residues.

Homooligomer and heterooligomer. Interacts with TRIM63 and probably with TRIM55. Interacts with tubulin.

It is found in the cytoplasm. The protein resides in the cytoskeleton. The protein localises to the myofibril. Its subcellular location is the sarcomere. It localises to the z line. Functionally, may bind and stabilize microtubules during myotubes formation. This is Tripartite motif-containing protein 54 (TRIM54) from Pongo abelii (Sumatran orangutan).